Here is a 23-residue protein sequence, read N- to C-terminus: NADP-dependent malic enzyme (23 aa).

This sequence belongs to the malic enzymes family. Homotetramer.

The catalysed reaction is (S)-malate + NADP(+) = pyruvate + CO2 + NADPH. It carries out the reaction oxaloacetate + H(+) = pyruvate + CO2. This chain is NADP-dependent malic enzyme, found in Populus euphratica (Euphrates poplar).